Consider the following 147-residue polypeptide: FAD synthase (147 aa).

ATP-binding positions include 13 to 14 (TF), 18 to 21 (HEGH), D100, and F127.

This sequence belongs to the archaeal FAD synthase family. In terms of assembly, homodimer. A divalent metal cation serves as cofactor.

The catalysed reaction is FMN + ATP + H(+) = FAD + diphosphate. It functions in the pathway cofactor biosynthesis; FAD biosynthesis; FAD from FMN: step 1/1. Functionally, catalyzes the transfer of the AMP portion of ATP to flavin mononucleotide (FMN) to produce flavin adenine dinucleotide (FAD) coenzyme. The chain is FAD synthase from Korarchaeum cryptofilum (strain OPF8).